Reading from the N-terminus, the 354-residue chain is Elongation factor Ts (354 aa).

Residues 81-84 (TDFV) are involved in Mg(2+) ion dislocation from EF-Tu.

Belongs to the EF-Ts family.

It is found in the cytoplasm. In terms of biological role, associates with the EF-Tu.GDP complex and induces the exchange of GDP to GTP. It remains bound to the aminoacyl-tRNA.EF-Tu.GTP complex up to the GTP hydrolysis stage on the ribosome. This is Elongation factor Ts from Campylobacter curvus (strain 525.92).